Reading from the N-terminus, the 78-residue chain is MKNKREKMRPKSSTILILLMSVLILLLSIDILANHIIIKVDGYYYDGLGQKLAMKDVIPINASFNKIKSQLEKSMKFH.

Residues 13 to 33 (STILILLMSVLILLLSIDILA) form a helical membrane-spanning segment.

The protein localises to the membrane. This is an uncharacterized protein from Methanocaldococcus jannaschii (strain ATCC 43067 / DSM 2661 / JAL-1 / JCM 10045 / NBRC 100440) (Methanococcus jannaschii).